The primary structure comprises 111 residues: Small ribosomal subunit protein bS16 (111 aa).

Belongs to the bacterial ribosomal protein bS16 family.

The sequence is that of Small ribosomal subunit protein bS16 from Rickettsia bellii (strain OSU 85-389).